The chain runs to 521 residues: Bifunctional purine biosynthesis protein PurH (521 aa).

The MGS-like domain occupies 1–147 (MGEITRALIS…KNWEGVTVLV (147 aa)).

The protein belongs to the PurH family.

The enzyme catalyses (6R)-10-formyltetrahydrofolate + 5-amino-1-(5-phospho-beta-D-ribosyl)imidazole-4-carboxamide = 5-formamido-1-(5-phospho-D-ribosyl)imidazole-4-carboxamide + (6S)-5,6,7,8-tetrahydrofolate. The catalysed reaction is IMP + H2O = 5-formamido-1-(5-phospho-D-ribosyl)imidazole-4-carboxamide. Its pathway is purine metabolism; IMP biosynthesis via de novo pathway; 5-formamido-1-(5-phospho-D-ribosyl)imidazole-4-carboxamide from 5-amino-1-(5-phospho-D-ribosyl)imidazole-4-carboxamide (10-formyl THF route): step 1/1. It participates in purine metabolism; IMP biosynthesis via de novo pathway; IMP from 5-formamido-1-(5-phospho-D-ribosyl)imidazole-4-carboxamide: step 1/1. The protein is Bifunctional purine biosynthesis protein PurH of Acidithiobacillus ferrooxidans (strain ATCC 53993 / BNL-5-31) (Leptospirillum ferrooxidans (ATCC 53993)).